We begin with the raw amino-acid sequence, 99 residues long: MALTKAEMVERLFDEVGLNKREAKEFVDTFFDLLRDALEQGRQIKLSGFGNFELRCKNQRPGRNPKTGEEIPISARTVVTFRSGQKLKERVDAYVGSRQ.

The protein belongs to the bacterial histone-like protein family. Heterodimer of an alpha and a beta chain.

Functionally, this protein is one of the two subunits of integration host factor, a specific DNA-binding protein that functions in genetic recombination as well as in transcriptional and translational control. The sequence is that of Integration host factor subunit alpha (ihfA) from Xylella fastidiosa (strain 9a5c).